We begin with the raw amino-acid sequence, 120 residues long: NAD(P)H-quinone oxidoreductase subunit 3, chloroplastic (120 aa).

3 helical membrane passes run 9 to 29, 64 to 84, and 88 to 108; these read IFWAFLIISSLIPILVFFISG, MFALVFVVFDVETVFLYPWAM, and VLGVSVFVEALIFVLILIVGL.

It belongs to the complex I subunit 3 family. As to quaternary structure, NDH is composed of at least 16 different subunits, 5 of which are encoded in the nucleus.

The protein resides in the plastid. It is found in the chloroplast thylakoid membrane. It carries out the reaction a plastoquinone + NADH + (n+1) H(+)(in) = a plastoquinol + NAD(+) + n H(+)(out). The enzyme catalyses a plastoquinone + NADPH + (n+1) H(+)(in) = a plastoquinol + NADP(+) + n H(+)(out). Functionally, NDH shuttles electrons from NAD(P)H:plastoquinone, via FMN and iron-sulfur (Fe-S) centers, to quinones in the photosynthetic chain and possibly in a chloroplast respiratory chain. The immediate electron acceptor for the enzyme in this species is believed to be plastoquinone. Couples the redox reaction to proton translocation, and thus conserves the redox energy in a proton gradient. The chain is NAD(P)H-quinone oxidoreductase subunit 3, chloroplastic from Guizotia abyssinica (Niger).